The primary structure comprises 255 residues: Type III pantothenate kinase (255 aa).

6-13 (DIGNTTSE) is a binding site for ATP. Residues tyrosine 100 and 107–110 (GIDR) each bind substrate. Residue aspartate 109 is the Proton acceptor of the active site. Aspartate 129 contacts K(+). Threonine 132 contacts ATP. Threonine 184 is a substrate binding site.

The protein belongs to the type III pantothenate kinase family. In terms of assembly, homodimer. The cofactor is NH4(+). K(+) serves as cofactor.

It is found in the cytoplasm. The catalysed reaction is (R)-pantothenate + ATP = (R)-4'-phosphopantothenate + ADP + H(+). Its pathway is cofactor biosynthesis; coenzyme A biosynthesis; CoA from (R)-pantothenate: step 1/5. Functionally, catalyzes the phosphorylation of pantothenate (Pan), the first step in CoA biosynthesis. The sequence is that of Type III pantothenate kinase from Persephonella marina (strain DSM 14350 / EX-H1).